A 561-amino-acid chain; its full sequence is Urocanate hydratase (561 aa).

NAD(+)-binding positions include 52–53 (GG), glutamine 130, 176–178 (GMG), glutamate 196, arginine 201, 242–243 (NA), 263–267 (QTSAH), 273–274 (YL), and tyrosine 322. Cysteine 410 is an active-site residue. Residue glycine 492 coordinates NAD(+).

Belongs to the urocanase family. It depends on NAD(+) as a cofactor.

Its subcellular location is the cytoplasm. It carries out the reaction 4-imidazolone-5-propanoate = trans-urocanate + H2O. It functions in the pathway amino-acid degradation; L-histidine degradation into L-glutamate; N-formimidoyl-L-glutamate from L-histidine: step 2/3. In terms of biological role, catalyzes the conversion of urocanate to 4-imidazolone-5-propionate. This is Urocanate hydratase from Salmonella newport (strain SL254).